We begin with the raw amino-acid sequence, 579 residues long: UPF0324 membrane protein DVU_2133 (579 aa).

The next 11 helical transmembrane spans lie at 26-45 (YWAIWLGFVILIAGMWLFLA), 193-215 (PFNIATSLPMLMVALGLFFAVGM), 225-243 (FLVGFIGVFFVAVLALMMG), 250-272 (YWGIGAEAWAIIIGMLVANTVGT), 305-327 (IGIPGIFVAWVVTPIVLICTFIF), 369-391 (LTLAIGLSLVFTAIMMIAMPAFI), 401-423 (GGAWMGGTIDATGAVAAAGAFLG), 436-456 (IQNVLIGVVAFGVAVYWCARV), 476-495 (FVLGFLAASVLFSVISGSLG), 515-534 (LRNWFFCLAFTSIGLATNFR), and 549-571 (YVAGQSFNLVLTLAMAYVMFYIV).

It belongs to the UPF0324 family.

The protein localises to the cell membrane. The sequence is that of UPF0324 membrane protein DVU_2133 from Nitratidesulfovibrio vulgaris (strain ATCC 29579 / DSM 644 / CCUG 34227 / NCIMB 8303 / VKM B-1760 / Hildenborough) (Desulfovibrio vulgaris).